Reading from the N-terminus, the 1058-residue chain is MSAMNPLLSFLFNHPNPSQKFRDQVAQLAHSNYAILVPQISLDDHCDAELTPEAVFSHVIRISHTGENQRARYFASANGRTVIFKNDQVMTYRGYKNNVTVNIVDQYVYTPVCWYLPRTCFQNFLVYEISGYLTEKPLPEAPKEIDQNQYDGPSFEDILLIYPNVGRQLSRLLATTFDNYTSTAANTEELDLEFERATDRAIEYVQAIDPLMVRRIIEEQRLTETQLEKKIDEYVESQLSRKLWNALIALRTNEDGPLDQAVESIKYLSLNQVDLPENEKHWEAKVVAAANVLQTLANTSTNESLPCNCRFLENTLMKCIDTLTDDSIQVNADVLVSLLLVVVARANISHLNSTIYYIRSFSSNAVDSGKLGYMLSTLEAVMYHIGENREQLEAISEANRWFFERVEKGDLTEFDFERPSMKSGLQRDDADWKTVFAATNPAGESALMCAVSSNQQSSLTCLLDHFGYTQEDILADRSVQGSTLLVSALRTENEDIIKLVLDRVRDCADLAHYLSVGDEYGRSVGHYFFHSLYLQQQVGSLINWTARDNQGQTPLSSLCRSYDNPDYHALFKNALKTCLDATGMVDLRVHTDAKGNTLLHTVSDEKVLSTLLNHPDVLVNVNQPNKRGMTALMAHAKYARLKAIEVLCKDPRIDFAPTDNKGMNVFDIARDRRTADFLDECYMSLQPNLGETDKYCEILRSVIADGELCFVIKTRQDGKLSAVRRPYSDFVFLQKWLAHEQPLSWFPALMTPTNPFAIPHRPSREILHAMHLRLNLFLRTLLLHPTFSNHELLWEWLLVQDISHTHLAERTTKKLENKKEKDLEEYIILGEPEMDEIEGFVSHALQQVDLMRKATMNLHQASVKLCNAHRDYCKSWMLMKETVDELKEIPGTSPRENIIANLSSAMVTLGDTFRINNSSPFVFSCYIESLQNMADATTLALAHPLAQISHLRLQQMLLVKLQADAVALSEKKTFRDFFHDREKEIRLIKNRIHITENEIRRLSMETKNAQITLASELGGFYQVHEHELTLSIKNIVSRNIKRHKELQGDLEEIQRRFI.

Residues threonine 252–alanine 394 enclose the VPS9 domain.

The protein belongs to the UPF0507 family.

The sequence is that of UPF0507 protein YALI0E18612g from Yarrowia lipolytica (strain CLIB 122 / E 150) (Yeast).